We begin with the raw amino-acid sequence, 466 residues long: MISIAFYKGKKVALFGLGKSGLATAQALISGGADVVAWDDNPSGVQAAHRENIPARNLQYENWSEFVALILAPGVPLTYPQPHWVVDKARQANIEIIGDIELFVRARNHFLQQYGFCDEDVPFIAITGTNGKSTTTALLAHLLEQMGYDVQMGGNIGTAILTLKPFVKKRIYVIECSSFQIDLAPSLQPTIGLLLNLTPDHIDRHGSFAHYVNAKKNLVTGASQAFISVDDAACQVLYRQLLHEGHHVEAVSKEHFVENGFYADGTQLFSVCQGRRHMLADLASMAALRGSHNAQNALMALATLQALKITDPHMNKHLASYQGLAHRMQQVRKMGSVLFINDSKATNAEASAPALAAFNNIFWIVGGQAKEAGIVSLRGFFHKIRKAYLIGAAAEEFAGVIGSSFPFSMSLTLENAVHEAAVDAMRCKAKEVVVLFSPACASYDQFKNYEVRGEAFISFVMQLKET.

128-134 (GTNGKST) contacts ATP.

Belongs to the MurCDEF family.

The protein resides in the cytoplasm. The catalysed reaction is UDP-N-acetyl-alpha-D-muramoyl-L-alanine + D-glutamate + ATP = UDP-N-acetyl-alpha-D-muramoyl-L-alanyl-D-glutamate + ADP + phosphate + H(+). Its pathway is cell wall biogenesis; peptidoglycan biosynthesis. Functionally, cell wall formation. Catalyzes the addition of glutamate to the nucleotide precursor UDP-N-acetylmuramoyl-L-alanine (UMA). In Bartonella henselae (strain ATCC 49882 / DSM 28221 / CCUG 30454 / Houston 1) (Rochalimaea henselae), this protein is UDP-N-acetylmuramoylalanine--D-glutamate ligase.